A 65-amino-acid chain; its full sequence is Large ribosomal subunit protein uL29 (65 aa).

It belongs to the universal ribosomal protein uL29 family.

In Buchnera aphidicola subsp. Acyrthosiphon pisum (strain APS) (Acyrthosiphon pisum symbiotic bacterium), this protein is Large ribosomal subunit protein uL29 (rpmC).